The following is a 280-amino-acid chain: Pantothenate synthetase (280 aa).

31–38 (MGNLHAGH) is an ATP binding site. H38 (proton donor) is an active-site residue. Q62 is a binding site for (R)-pantoate. Q62 is a beta-alanine binding site. 150 to 153 (GKKD) serves as a coordination point for ATP. Q156 is a binding site for (R)-pantoate. ATP-binding positions include V179 and 187–190 (MSSR).

Belongs to the pantothenate synthetase family. In terms of assembly, homodimer.

Its subcellular location is the cytoplasm. It catalyses the reaction (R)-pantoate + beta-alanine + ATP = (R)-pantothenate + AMP + diphosphate + H(+). It participates in cofactor biosynthesis; (R)-pantothenate biosynthesis; (R)-pantothenate from (R)-pantoate and beta-alanine: step 1/1. Catalyzes the condensation of pantoate with beta-alanine in an ATP-dependent reaction via a pantoyl-adenylate intermediate. This chain is Pantothenate synthetase, found in Xanthomonas axonopodis pv. citri (strain 306).